A 530-amino-acid polypeptide reads, in one-letter code: RNA-binding protein 39 (530 aa).

A disordered region spans residues 1–146 (MADDIDIEAM…PVREPIDNLT (146 aa)). Ala-2 carries the post-translational modification N-acetylalanine. Basic and acidic residues predominate over residues 14-32 (PYKKDENKLNSANGHEERS). 2 stretches are compositionally biased toward basic residues: residues 33 to 56 (KKRKKSKSRSRSHERKRSKSKERK) and 64 to 95 (KKSKSRERKRSRSKERRRSRSRSRDRRFRGRY). Tyr-95 carries the post-translational modification Phosphotyrosine. Phosphoserine is present on residues Ser-97 and Ser-100. A Glycyl lysine isopeptide (Lys-Gly) (interchain with G-Cter in SUMO2) cross-link involves residue Lys-111. Residue Ser-117 is modified to Phosphoserine. Residue Lys-119 forms a Glycyl lysine isopeptide (Lys-Gly) (interchain with G-Cter in SUMO2) linkage. Residues 119 to 130 (KLSRRRSRSKSP) show a composition bias toward basic residues. A phosphoserine mark is found at Ser-121 and Ser-136. Over residues 131 to 146 (FRKDKSPVREPIDNLT) the composition is skewed to basic and acidic residues. Residue Thr-146 is modified to Phosphothreonine. In terms of domain architecture, RRM 1 spans 153-230 (RTVFCMQLAA…VPIIVQASQA (78 aa)). Lys-244 participates in a covalent cross-link: Glycyl lysine isopeptide (Lys-Gly) (interchain with G-Cter in SUMO2). The 79-residue stretch at 250-328 (MRLYVGSLHF…RPMKVGHVTE (79 aa)) folds into the RRM 2 domain. An activating domain region spans residues 291–355 (KGYGFITFSD…RTGIDLGTTG (65 aa)). Residues 291–406 (KGYGFITFSD…IDLQTRLSQQ (116 aa)) are interaction with JUN. Ser-334, Ser-337, and Ser-341 each carry phosphoserine. The interval 355–406 (GRLQLMARLAEGTGLQIPPAAQQALQMSGSLAFGAVAEFSFVIDLQTRLSQQ) is interaction with ESR1 and ESR2. The segment at 406–530 (QTEASALAAA…ATQLLVPSRR (125 aa)) is interaction with NCOA6. Positions 445-508 (EIKDDVIEEC…KMITAAYVPL (64 aa)) constitute an RRM 3 domain.

This sequence belongs to the splicing factor SR family. As to quaternary structure, interacts with NCOA6 and JUN. Interacts with ESR1 and ESR2, in the presence of estradiol (E2). Interacts with RSRC1 (via Arg/Ser-rich domain). Interacts with SF3B1. Interacts with ZNF106 (via N-terminus).

It is found in the nucleus. Its function is as follows. RNA-binding protein that acts as a pre-mRNA splicing factor. Acts by promoting exon inclusion via regulation of exon cassette splicing. Also acts as a transcriptional coactivator for steroid nuclear receptors ESR1/ER-alpha and ESR2/ER-beta, and JUN/AP-1, independently of the pre-mRNA splicing factor activity. The chain is RNA-binding protein 39 (Rbm39) from Mus musculus (Mouse).